We begin with the raw amino-acid sequence, 438 residues long: 23S rRNA (uracil(1939)-C(5))-methyltransferase RlmD (438 aa).

The TRAM domain occupies 10–69 (KASVNTKHLSVDVVRLDHNGAGIAFVDKKPVFIEGALPGEKAIIQFIEQKKQFSRAKLIK). [4Fe-4S] cluster is bound by residues Cys82, Cys88, Cys91, and Cys169. Gln272, Phe301, Asn306, Glu322, Asn349, and Asp370 together coordinate S-adenosyl-L-methionine. Cys396 functions as the Nucleophile in the catalytic mechanism.

Belongs to the class I-like SAM-binding methyltransferase superfamily. RNA M5U methyltransferase family. RlmD subfamily.

The catalysed reaction is uridine(1939) in 23S rRNA + S-adenosyl-L-methionine = 5-methyluridine(1939) in 23S rRNA + S-adenosyl-L-homocysteine + H(+). Its function is as follows. Catalyzes the formation of 5-methyl-uridine at position 1939 (m5U1939) in 23S rRNA. The sequence is that of 23S rRNA (uracil(1939)-C(5))-methyltransferase RlmD from Aliivibrio fischeri (strain MJ11) (Vibrio fischeri).